A 397-amino-acid chain; its full sequence is Homocitrate synthase AksA (397 aa).

The Pyruvate carboxyltransferase domain occupies 19 to 270 (VIVYDTTLRD…DPGFNTEVLA (252 aa)).

It belongs to the alpha-IPM synthase/homocitrate synthase family.

It catalyses the reaction acetyl-CoA + 2-oxoglutarate + H2O = (2R)-homocitrate + CoA + H(+). It carries out the reaction 2-oxoadipate + acetyl-CoA + H2O = (R)-dihomocitrate + CoA + H(+). The enzyme catalyses 2-oxoheptanedioate + acetyl-CoA + H2O = (R)-trihomocitrate + CoA + H(+). It participates in organic acid metabolism; 2-oxosuberate biosynthesis. In terms of biological role, catalyzes the condensation of alpha-ketoglutarate and acetyl-CoA to form (R)-homocitrate. Can also catalyze the condensation of alpha-ketoadipate with acetyl-CoA to form (R)-homo(2)citrate, and the condensation of alpha-ketopimelate with acetyl-CoA to form (R)-homo(3)citrate. These reactions are part of the biosynthesis pathway of coenzyme B and biotin. In Methanopyrus kandleri (strain AV19 / DSM 6324 / JCM 9639 / NBRC 100938), this protein is Homocitrate synthase AksA (aksA).